The chain runs to 254 residues: Imidazole glycerol phosphate synthase subunit HisF (254 aa).

Catalysis depends on residues aspartate 11 and aspartate 130.

Belongs to the HisA/HisF family. As to quaternary structure, heterodimer of HisH and HisF.

The protein localises to the cytoplasm. It catalyses the reaction 5-[(5-phospho-1-deoxy-D-ribulos-1-ylimino)methylamino]-1-(5-phospho-beta-D-ribosyl)imidazole-4-carboxamide + L-glutamine = D-erythro-1-(imidazol-4-yl)glycerol 3-phosphate + 5-amino-1-(5-phospho-beta-D-ribosyl)imidazole-4-carboxamide + L-glutamate + H(+). It participates in amino-acid biosynthesis; L-histidine biosynthesis; L-histidine from 5-phospho-alpha-D-ribose 1-diphosphate: step 5/9. Functionally, IGPS catalyzes the conversion of PRFAR and glutamine to IGP, AICAR and glutamate. The HisF subunit catalyzes the cyclization activity that produces IGP and AICAR from PRFAR using the ammonia provided by the HisH subunit. This is Imidazole glycerol phosphate synthase subunit HisF from Gloeobacter violaceus (strain ATCC 29082 / PCC 7421).